The primary structure comprises 581 residues: uncharacterized protein (581 aa).

Positions methionine 1–alanine 28 are cleaved as a signal peptide.

This is an uncharacterized protein from Archaeoglobus fulgidus (strain ATCC 49558 / DSM 4304 / JCM 9628 / NBRC 100126 / VC-16).